Consider the following 187-residue polypeptide: Putative protein 2 (187 aa).

2 helical membrane-spanning segments follow: residues 10–27 and 99–121; these read MLAA…NVGV and VTII…LLLV.

This sequence belongs to the TMEM9 family.

The protein localises to the membrane. This chain is Putative protein 2, found in Takifugu rubripes (Japanese pufferfish).